The sequence spans 337 residues: Protein-arginine kinase (337 aa).

The Phosphagen kinase C-terminal domain occupies 8 to 239 (VVLSSRIRLA…KQIISSERRA (232 aa)). Residues 11–15 (SSRIR), His-76, Arg-110, 161–165 (RASVM), and 192–197 (RGIYGE) contribute to the ATP site. An RDXXRA motif of the pArg binding pocket involved in allosteric regulation motif is present at residues 321–326 (RDVKRA).

It belongs to the ATP:guanido phosphotransferase family.

The enzyme catalyses L-arginyl-[protein] + ATP = N(omega)-phospho-L-arginyl-[protein] + ADP + H(+). Appears to be allosterically activated by the binding of pArg-containing polypeptides to the pArg-binding pocket localized in the C-terminal domain of McsB. Functionally, catalyzes the specific phosphorylation of arginine residues in proteins. This Caldanaerobacter subterraneus subsp. tengcongensis (strain DSM 15242 / JCM 11007 / NBRC 100824 / MB4) (Thermoanaerobacter tengcongensis) protein is Protein-arginine kinase.